The sequence spans 436 residues: Phaseolin, alpha-type (436 aa).

Positions 1–24 are cleaved as a signal peptide; sequence MMRARVPLLLLGILFLASLSASFA. The disordered stretch occupies residues 233-257; the sequence is LSKHAKSSSRKSHSKQDNTIGNEFG. Over residues 236–245 the composition is skewed to basic residues; sequence HAKSSSRKSH. A Cupin type-1 domain is found at 245-396; the sequence is HSKQDNTIGN…TFSGSGEEVM (152 aa). Asn258 carries an N-linked (GlcNAc...) (complex) asparagine; alternate glycan. N-linked (GlcNAc...) (high mannose) asparagine; alternate glycosylation occurs at Asn258. An N-linked (GlcNAc...) (high mannose) asparagine glycan is attached at Asn347. The interval 411 to 436 is disordered; the sequence is HHHQQEQQKGSHQQEQQKGRKGAFVY. The segment covering 417-426 has biased composition (low complexity); that stretch reads QQKGSHQQEQ.

It belongs to the 7S seed storage protein family. In terms of assembly, homotrimer. N-glycosylated; glycans consist in Man9(GlcNAc)2 and Man7(GlcNAc)2 when dually glycosylated at Asn-258 and Asn-347, whereas it consists in Xyl-Man3(GlcNAc)2 when solely glycosylated at Asn-258.

The protein localises to the vacuole. The protein resides in the aleurone grain. Major seed storage protein. In Phaseolus vulgaris (Kidney bean), this protein is Phaseolin, alpha-type.